A 562-amino-acid polypeptide reads, in one-letter code: MIFSSRRRIRGRWGRSGPMMRGMGALTRVVGVVWRRSLQLRVVALTFGLSLAVILALGFVLTSQLTSRVLDVKVRVAIEQIERARTTVTGIVNGEETRSLDSSLQLARNTLTSKTDPTSGAGLVGAFDAVLIVPGDGPRTATTAGPVDQVPNSLRGFIKAGQAAYQYATVHTEGFSGPALIIGTPTSSQVTNLELYLIFPLKNEQATVTLVRGTMATGGMVLLVLLSGIALLVSRQVVVPVRSASRIAERFAEGHLSERMPVRGEDDMARLAVSFNDMAESLSRQITQLEEFGNLQRRFTSDVSHELRTPLTTVRMAADLIYDHSSDLDPTLRRSTELMVSELDRFETLLNDLLEISRHDAGVAELSVEAVDLRVMVNNALGNVGHLAEEAGIELLVDMPVDEVIAEVDARRVERILRNLIANAIDHSEHKPVRIRMAADEDTVAVTVRDYGIGLRPGEEKLVFSRFWRSDPSRVRRSGGTGLGLAISIEDARLHQGRLEAWGEPGQGACFRLTLPLVRGHKVTTSPLPMKPILQPSPQASTAGQQHGTQRQRLREHAERSR.

A run of 2 helical transmembrane segments spans residues 42–62 and 213–233; these read VVAL…FVLT and GTMA…ALLV. The 53-residue stretch at 235-287 folds into the HAMP domain; that stretch reads RQVVVPVRSASRIAERFAEGHLSERMPVRGEDDMARLAVSFNDMAESLSRQIT. A Histidine kinase domain is found at 302–519; it reads DVSHELRTPL…CFRLTLPLVR (218 aa). Residues 526–562 form a disordered region; the sequence is SPLPMKPILQPSPQASTAGQQHGTQRQRLREHAERSR. The span at 536-551 shows a compositional bias: polar residues; sequence PSPQASTAGQQHGTQR. A compositionally biased stretch (basic and acidic residues) spans 553–562; it reads RLREHAERSR.

The protein resides in the cell membrane. The enzyme catalyses ATP + protein L-histidine = ADP + protein N-phospho-L-histidine.. Functionally, member of the two-component regulatory system MtrA/MtrB. Seems to function as a membrane-associated protein kinase that phosphorylates MtrA in response to environmental signals. The sequence is that of Sensor histidine kinase MtrB (mtrB) from Mycobacterium leprae (strain TN).